The following is a 542-amino-acid chain: Sterile alpha motif domain-containing protein 11 (542 aa).

A disordered region spans residues 268–364 (LLALPPQGPP…GRGLLSGSTL (97 aa)). The span at 273–285 (PQGPPGPGPPIPP) shows a compositional bias: pro residues. A Phosphothreonine modification is found at Thr-342. Positions 404-469 (WTVDDVCNFV…AQVAKRLGRV (66 aa)) constitute an SAM domain. The disordered stretch occupies residues 486-542 (LQAPELSPGHQPLSPATTTSPYEGTHLPTGQASPKQENGSGTIALLSGAPDPSQLLQ). At Ser-499 the chain carries Phosphoserine. Positions 499 to 526 (SPATTTSPYEGTHLPTGQASPKQENGSG) are enriched in polar residues.

In terms of assembly, self-associates. Component of a Polycomb group (PcG) multiprotein PRC1-like complex. Interacts with SAMD7 and PHC2. As to expression, expressed in the outer nuclear layer of rod photoreceptors in the retina (at protein level). Predominantly expressed in retinal photoreceptors and pineal gland.

Its subcellular location is the nucleus. In terms of biological role, component of a Polycomb group (PcG) multiprotein PRC1-like complex, essential for establishing rod photoreceptor cell identity and function by silencing nonrod gene expression in developing rod photoreceptor cells. This Mus musculus (Mouse) protein is Sterile alpha motif domain-containing protein 11 (Samd11).